A 324-amino-acid polypeptide reads, in one-letter code: D-alanine--D-alanine ligase (324 aa).

The region spanning 121-321 (NQYLKAFGVR…IKDVMTDIIE (201 aa)) is the ATP-grasp domain. An ATP-binding site is contributed by 149–204 (MEKIGLPCFIKPSLGGSSFGVTKVKTKEQIQPAIVKAFEEAQEVLVEAFMEGTELT). The Mg(2+) site is built by D275, E288, and N290.

This sequence belongs to the D-alanine--D-alanine ligase family. It depends on Mg(2+) as a cofactor. The cofactor is Mn(2+).

It localises to the cytoplasm. The catalysed reaction is 2 D-alanine + ATP = D-alanyl-D-alanine + ADP + phosphate + H(+). It functions in the pathway cell wall biogenesis; peptidoglycan biosynthesis. Its function is as follows. Cell wall formation. The sequence is that of D-alanine--D-alanine ligase from Bacteroides thetaiotaomicron (strain ATCC 29148 / DSM 2079 / JCM 5827 / CCUG 10774 / NCTC 10582 / VPI-5482 / E50).